Here is a 360-residue protein sequence, read N- to C-terminus: Alanine racemase (360 aa).

The active-site Proton acceptor; specific for D-alanine is the Lys-33. The residue at position 33 (Lys-33) is an N6-(pyridoxal phosphate)lysine. Arg-129 provides a ligand contact to substrate. Tyr-253 serves as the catalytic Proton acceptor; specific for L-alanine. Met-301 provides a ligand contact to substrate.

This sequence belongs to the alanine racemase family. Requires pyridoxal 5'-phosphate as cofactor.

The catalysed reaction is L-alanine = D-alanine. It functions in the pathway amino-acid biosynthesis; D-alanine biosynthesis; D-alanine from L-alanine: step 1/1. In terms of biological role, catalyzes the interconversion of L-alanine and D-alanine. May also act on other amino acids. This Xanthomonas campestris pv. campestris (strain 8004) protein is Alanine racemase (alr).